An 88-amino-acid chain; its full sequence is Phosphocarrier protein HPr (88 aa).

Positions 1 to 88 (MEQASFVVID…EVLKKEGLAE (88 aa)) constitute an HPr domain. Catalysis depends on His-15, which acts as the Pros-phosphohistidine intermediate. Residue Ser-46 is modified to Phosphoserine; by HPrK/P.

It belongs to the HPr family.

Its subcellular location is the cytoplasm. Its activity is regulated as follows. Phosphorylation on Ser-46 inhibits the phosphoryl transfer from enzyme I to HPr. General (non sugar-specific) component of the phosphoenolpyruvate-dependent sugar phosphotransferase system (sugar PTS). This major carbohydrate active-transport system catalyzes the phosphorylation of incoming sugar substrates concomitantly with their translocation across the cell membrane. The phosphoryl group from phosphoenolpyruvate (PEP) is transferred to the phosphoryl carrier protein HPr by enzyme I. Phospho-HPr then transfers it to the PTS EIIA domain. Functionally, P-Ser-HPr interacts with the catabolite control protein A (CcpA), forming a complex that binds to DNA at the catabolite response elements cre, operator sites preceding a large number of catabolite-regulated genes. Thus, P-Ser-HPr is a corepressor in carbon catabolite repression (CCR), a mechanism that allows bacteria to coordinate and optimize the utilization of available carbon sources. P-Ser-HPr also plays a role in inducer exclusion, in which it probably interacts with several non-PTS permeases and inhibits their transport activity. This Listeria monocytogenes serovar 1/2a (strain ATCC BAA-679 / EGD-e) protein is Phosphocarrier protein HPr (ptsH).